The chain runs to 430 residues: Enolase (430 aa).

Residue glutamine 165 coordinates (2R)-2-phosphoglycerate. The active-site Proton donor is glutamate 207. Residues aspartate 244, glutamate 287, and aspartate 314 each contribute to the Mg(2+) site. Positions 339, 368, 369, and 390 each coordinate (2R)-2-phosphoglycerate. Residue lysine 339 is the Proton acceptor of the active site.

Belongs to the enolase family. Component of the RNA degradosome, a multiprotein complex involved in RNA processing and mRNA degradation. The cofactor is Mg(2+).

Its subcellular location is the cytoplasm. It localises to the secreted. It is found in the cell surface. It catalyses the reaction (2R)-2-phosphoglycerate = phosphoenolpyruvate + H2O. It participates in carbohydrate degradation; glycolysis; pyruvate from D-glyceraldehyde 3-phosphate: step 4/5. Catalyzes the reversible conversion of 2-phosphoglycerate (2-PG) into phosphoenolpyruvate (PEP). It is essential for the degradation of carbohydrates via glycolysis. This Xanthomonas euvesicatoria pv. vesicatoria (strain 85-10) (Xanthomonas campestris pv. vesicatoria) protein is Enolase.